The sequence spans 382 residues: Putative glutamate--cysteine ligase 2-1 (382 aa).

The protein belongs to the glutamate--cysteine ligase type 2 family. YbdK subfamily.

The enzyme catalyses L-cysteine + L-glutamate + ATP = gamma-L-glutamyl-L-cysteine + ADP + phosphate + H(+). Its function is as follows. ATP-dependent carboxylate-amine ligase which exhibits weak glutamate--cysteine ligase activity. In Nocardioides sp. (strain ATCC BAA-499 / JS614), this protein is Putative glutamate--cysteine ligase 2-1.